The following is a 239-amino-acid chain: Small ribosomal subunit protein eS1 (239 aa).

Positions 1-24 (MAIQPPGSYPQGNKKGKAKKKSGQ) are disordered.

Belongs to the eukaryotic ribosomal protein eS1 family. In terms of assembly, component of the small ribosomal subunit. Mature ribosomes consist of a small (40S) and a large (60S) subunit. The 40S subunit contains about 33 different proteins and 1 molecule of RNA (18S). The 60S subunit contains about 49 different proteins and 3 molecules of RNA (25S, 5.8S and 5S).

It is found in the cytoplasm. In Encephalitozoon cuniculi (strain GB-M1) (Microsporidian parasite), this protein is Small ribosomal subunit protein eS1.